Here is a 350-residue protein sequence, read N- to C-terminus: Hydroxymethylglutaryl-CoA synthase (350 aa).

Asp-30 contacts (3S)-3-hydroxy-3-methylglutaryl-CoA. Glu-82 functions as the Proton donor/acceptor in the catalytic mechanism. Residues Cys-114, Ser-155, Thr-203, and His-236 each coordinate (3S)-3-hydroxy-3-methylglutaryl-CoA. Catalysis depends on Cys-114, which acts as the Acyl-thioester intermediate. The active-site Proton donor/acceptor is the His-236. Arg-241 provides a ligand contact to CoA. Arg-245, Asn-268, and Ser-298 together coordinate (3S)-3-hydroxy-3-methylglutaryl-CoA.

Belongs to the thiolase-like superfamily. Archaeal HMG-CoA synthase family. As to quaternary structure, interacts with acetoacetyl-CoA thiolase that catalyzes the precedent step in the pathway and with a DUF35 protein. The acetoacetyl-CoA thiolase/HMG-CoA synthase complex channels the intermediate via a fused CoA-binding site, which allows for efficient coupling of the endergonic thiolase reaction with the exergonic HMGCS reaction.

It catalyses the reaction acetoacetyl-CoA + acetyl-CoA + H2O = (3S)-3-hydroxy-3-methylglutaryl-CoA + CoA + H(+). It participates in metabolic intermediate biosynthesis; (R)-mevalonate biosynthesis; (R)-mevalonate from acetyl-CoA: step 2/3. Catalyzes the condensation of acetyl-CoA with acetoacetyl-CoA to form 3-hydroxy-3-methylglutaryl-CoA (HMG-CoA). Functions in the mevalonate (MVA) pathway leading to isopentenyl diphosphate (IPP), a key precursor for the biosynthesis of isoprenoid compounds that are building blocks of archaeal membrane lipids. In Pyrobaculum aerophilum (strain ATCC 51768 / DSM 7523 / JCM 9630 / CIP 104966 / NBRC 100827 / IM2), this protein is Hydroxymethylglutaryl-CoA synthase.